A 333-amino-acid polypeptide reads, in one-letter code: Cap-specific mRNA (nucleoside-2'-O-)-methyltransferase (333 aa).

Residue Y22 coordinates mRNA. The S-adenosyl-L-methionine site is built by Q39, Y66, G68, G72, D95, R97, V116, and D138. The tract at residues 169–249 (PVASSLKWRC…NKIVRNKVVV (81 aa)) is binding to NPH-I. Positions 169 to 333 (PVASSLKWRC…NSKRSVRSNK (165 aa)) are binding to Rap94. K175 acts as the For methyltransferase activity in catalysis. MRNA is bound by residues 177-180 (RCPF), D182, 205-207 (SAE), and E233. The tract at residues 305–333 (SHEPIQRKISSKNSMSKNRNSKRSVRSNK) is disordered. A compositionally biased stretch (low complexity) spans 311–322 (RKISSKNSMSKN). The segment covering 323–333 (RNSKRSVRSNK) has biased composition (basic residues).

The protein belongs to the class I-like SAM-binding methyltransferase superfamily. Poxvirus/kinetoplastid 2'-O-MTase family. As to quaternary structure, interacts with poly(A) polymerase catalytic subunit OPG063. Interacts with OPG109 and OPG123; these interactions might help linking transcription to capping and polyadenylation.

It is found in the virion. The catalysed reaction is a 5'-end (N(7)-methyl 5'-triphosphoguanosine)-ribonucleoside in mRNA + S-adenosyl-L-methionine = a 5'-end (N(7)-methyl 5'-triphosphoguanosine)-(2'-O-methyl-ribonucleoside) in mRNA + S-adenosyl-L-homocysteine + H(+). Its function is as follows. Displays methyltransferase, positive regulation of the poly(A) polymerase and transcription elongation activities. Involved in the modification of both mRNA ends and in intermediate and late gene positive transcription elongation. At the mRNAs 5' end, methylates the ribose 2' OH group of the first transcribed nucleotide, thereby producing a 2'-O-methylpurine cap. At the 3' end, functions as a processivity factor which stimulates the activity of the viral poly(A) polymerase OPG063 that creates mRNA's poly(A) tail. In the presence of OPG102, OPG063 does not dissociate from the RNA allowing tail elongation to around 250 adenylates. In Vaccinia virus (strain Western Reserve) (VACV), this protein is Cap-specific mRNA (nucleoside-2'-O-)-methyltransferase (OPG102).